The following is a 407-amino-acid chain: E3 ubiquitin-protein ligase TRIM13 (407 aa).

Residues 10-58 (CPICCSLFDDPRVLPCSHNFCKKCLEGILEGSVRNSLWRPAPFKCPTCR) form an RING-type zinc finger. The B box-type zinc finger occupies 89–131 (PKMPVCKGHLGQPLNIFCLTDMQLICGICATRGEHTKHVFCSI). Positions 94, 97, 117, and 123 each coordinate Zn(2+). A coiled-coil region spans residues 172-200 (LQLLTKDSDKVKEFFEKLQHTLDQKKNEI). Residues 317–337 (LFLLILLLGLVIVFGPTMFLE) form a helical membrane-spanning segment.

This sequence belongs to the TRIM/RBCC family. As to quaternary structure, interacts (via C-terminal domain) with VCP. Interacts with AKT1; the interaction ubiquitinates AKT1 and leads to its proteasomal degradation. Interacts with MDM2; the interaction ubiquitinates AKT1 and leads to its proteasomal degradation. Interacts with p62/SQSTM1. Interacts with TRAF6. Interacts with IKBKG/NEMO. In terms of processing, auto-ubiquitinated; requires the RING-type zinc finger. Auto-polyubiquitination leads to proteasomal degradation.

It localises to the endoplasmic reticulum membrane. The catalysed reaction is S-ubiquitinyl-[E2 ubiquitin-conjugating enzyme]-L-cysteine + [acceptor protein]-L-lysine = [E2 ubiquitin-conjugating enzyme]-L-cysteine + N(6)-ubiquitinyl-[acceptor protein]-L-lysine.. It participates in protein modification; protein ubiquitination. Endoplasmic reticulum (ER) membrane anchored E3 ligase involved in the retrotranslocation and turnover of membrane and secretory proteins from the ER through a set of processes named ER-associated degradation (ERAD). This process acts on misfolded proteins as well as in the regulated degradation of correctly folded proteins. Enhances ionizing radiation-induced p53/TP53 stability and apoptosis via ubiquitinating MDM2 and AKT1 and decreasing AKT1 kinase activity through MDM2 and AKT1 proteasomal degradation. Regulates ER stress-induced autophagy, and may act as a tumor suppressor. Also plays a role in innate immune response by stimulating NF-kappa-B activity in the TLR2 signaling pathway. Ubiquitinates TRAF6 via the 'Lys-29'-linked polyubiquitination chain resulting in NF-kappa-B activation. Participates as well in T-cell receptor-mediated NF-kappa-B activation. In the presence of TNF, modulates the IKK complex by regulating IKBKG/NEMO ubiquitination leading to the repression of NF-kappa-B. The polypeptide is E3 ubiquitin-protein ligase TRIM13 (TRIM13) (Homo sapiens (Human)).